The sequence spans 325 residues: BTB/POZ domain-containing protein KCTD12 (325 aa).

Positions 1–28 (MALADSTRGLPNGGGGGGGSGSSSSSAE) are disordered. An N-acetylalanine modification is found at Ala2. The span at 11–21 (PNGGGGGGGSG) shows a compositional bias: gly residues. Position 119 is a phosphotyrosine (Tyr119). Positions 129–202 (LGAPQQPGPG…PLLTPSQSLD (74 aa)) are disordered. Residues Ser151, Ser171, and Ser185 each carry the phosphoserine modification. Thr196 is modified (phosphothreonine). Position 200 is a phosphoserine (Ser200).

As to quaternary structure, interacts as a tetramer with GABBR1 and GABBR2. Present in a variety of fetal organs, with highest expression levels in the cochlea and brain and, in stark contrast, is detected only at extremely low levels in adult organs, such as brain and lung.

Its subcellular location is the presynaptic cell membrane. The protein resides in the postsynaptic cell membrane. Its function is as follows. Auxiliary subunit of GABA-B receptors that determine the pharmacology and kinetics of the receptor response. Increases agonist potency and markedly alter the G-protein signaling of the receptors by accelerating onset and promoting desensitization. This Homo sapiens (Human) protein is BTB/POZ domain-containing protein KCTD12 (KCTD12).